The following is a 240-amino-acid chain: Mannosyl-D-glycerate transport/metabolism system repressor MngR (240 aa).

The HTH gntR-type domain occupies 4 to 72; the sequence is KPLYRQIADR…QGSGTYVKEE (69 aa). Positions 32–51 form a DNA-binding region, H-T-H motif; that stretch reads ESALQTEFGVSRVTVRQALR.

In terms of biological role, represses mngA and mngB. Regulates its own expression. This Escherichia coli (strain K12) protein is Mannosyl-D-glycerate transport/metabolism system repressor MngR (mngR).